Consider the following 475-residue polypeptide: GDP-fucose protein O-fucosyltransferase 3 (475 aa).

Residues 1-8 are Cytoplasmic-facing; sequence MVRMRRKR. The helical; Signal-anchor for type II membrane protein transmembrane segment at 9 to 29 threads the bilayer; it reads LWASCICFAAFFFLLVTLQVI. At 30–475 the chain is on the lumenal side; it reads TELGNSENKA…QEFWMLVFKQ (446 aa). Asn-107, Asn-165, and Asn-315 each carry an N-linked (GlcNAc...) asparagine glycan. Cys-386 and Cys-389 are joined by a disulfide. Residue Asn-462 is glycosylated (N-linked (GlcNAc...) asparagine).

This sequence belongs to the glycosyltransferase 10 family.

It localises to the endoplasmic reticulum membrane. The enzyme catalyses L-threonyl-[protein] + GDP-beta-L-fucose = 3-O-(alpha-L-fucosyl)-L-threonyl-[protein] + GDP + H(+). The catalysed reaction is L-seryl-[protein] + GDP-beta-L-fucose = 3-O-(alpha-L-fucosyl)-L-seryl-[protein] + GDP + H(+). It functions in the pathway protein modification; protein glycosylation. Protein O-fucosyltransferase that specifically catalyzes O-fucosylation of serine or threonine residues in EMI domains of target proteins. Attaches fucose through an O-glycosidic linkage. O-fucosylation of EMI domain-containing proteins may be required for facilitating protein folding and secretion. The polypeptide is GDP-fucose protein O-fucosyltransferase 3 (FUT10) (Gallus gallus (Chicken)).